The chain runs to 473 residues: 3-isopropylmalate dehydratase large subunit (473 aa).

Positions 354, 414, and 417 each coordinate [4Fe-4S] cluster.

It belongs to the aconitase/IPM isomerase family. LeuC type 1 subfamily. In terms of assembly, heterodimer of LeuC and LeuD. Requires [4Fe-4S] cluster as cofactor.

The enzyme catalyses (2R,3S)-3-isopropylmalate = (2S)-2-isopropylmalate. It participates in amino-acid biosynthesis; L-leucine biosynthesis; L-leucine from 3-methyl-2-oxobutanoate: step 2/4. Catalyzes the isomerization between 2-isopropylmalate and 3-isopropylmalate, via the formation of 2-isopropylmaleate. The chain is 3-isopropylmalate dehydratase large subunit from Mycobacterium tuberculosis (strain CDC 1551 / Oshkosh).